Consider the following 368-residue polypeptide: Protein tesmin/TSO1-like CXC 8 (368 aa).

Residues 64–185 (KHKGCRCKQS…KCINCKNVSE (122 aa)) enclose the CRC domain.

Belongs to the lin-54 family.

Its subcellular location is the nucleus. Plays a role in development of both male and female reproductive tissues. The protein is Protein tesmin/TSO1-like CXC 8 (TCX8) of Arabidopsis thaliana (Mouse-ear cress).